The sequence spans 299 residues: Bifunctional protein FolD (299 aa).

Residues 168–170 (GRS), Ser-193, and Ile-234 each bind NADP(+).

Belongs to the tetrahydrofolate dehydrogenase/cyclohydrolase family. Homodimer.

The catalysed reaction is (6R)-5,10-methylene-5,6,7,8-tetrahydrofolate + NADP(+) = (6R)-5,10-methenyltetrahydrofolate + NADPH. It carries out the reaction (6R)-5,10-methenyltetrahydrofolate + H2O = (6R)-10-formyltetrahydrofolate + H(+). The protein operates within one-carbon metabolism; tetrahydrofolate interconversion. Functionally, catalyzes the oxidation of 5,10-methylenetetrahydrofolate to 5,10-methenyltetrahydrofolate and then the hydrolysis of 5,10-methenyltetrahydrofolate to 10-formyltetrahydrofolate. The protein is Bifunctional protein FolD of Bartonella bacilliformis (strain ATCC 35685 / KC583 / Herrer 020/F12,63).